The primary structure comprises 592 residues: Thiol:disulfide interchange protein DsbD (592 aa).

Residues 1–19 form the signal peptide; it reads MKLIASFSIFMLMSIWSFA. 2 disulfide bridges follow: Cys-130–Cys-136 and Cys-204–Cys-326. 8 helical membrane passes run 186 to 206, 229 to 249, 265 to 285, 318 to 338, 345 to 365, 379 to 399, 406 to 426, and 440 to 460; these read IWVL…PCVF, FVLS…LGLV, IILG…FGAW, ISGL…LLYI, LLGF…LILF, WMNI…LMFV, MATD…FYVM, and ALVI…TIFG. Residues 443–592 form the Thioredoxin domain; it reads IFIGLFASAM…AFAAHAKNIL (150 aa). Residues Cys-508 and Cys-511 are joined by a disulfide bond.

Belongs to the thioredoxin family. DsbD subfamily.

The protein localises to the cell inner membrane. It carries out the reaction [protein]-dithiol + NAD(+) = [protein]-disulfide + NADH + H(+). The catalysed reaction is [protein]-dithiol + NADP(+) = [protein]-disulfide + NADPH + H(+). Required to facilitate the formation of correct disulfide bonds in some periplasmic proteins and for the assembly of the periplasmic c-type cytochromes. Acts by transferring electrons from cytoplasmic thioredoxin to the periplasm. This transfer involves a cascade of disulfide bond formation and reduction steps. The polypeptide is Thiol:disulfide interchange protein DsbD (Pseudoalteromonas atlantica (strain T6c / ATCC BAA-1087)).